The following is a 426-amino-acid chain: Lipid droplet localized protein (426 aa).

A helical membrane pass occupies residues 278–298 (FYGYLIGLWIMFLSIFVKYPF).

This sequence belongs to the saccharopine dehydrogenase family.

The protein resides in the membrane. Its subcellular location is the lipid droplet. The polypeptide is Lipid droplet localized protein (Caenorhabditis elegans).